Consider the following 124-residue polypeptide: Large ribosomal subunit protein bL12 (124 aa).

Belongs to the bacterial ribosomal protein bL12 family. Homodimer. Part of the ribosomal stalk of the 50S ribosomal subunit. Forms a multimeric L10(L12)X complex, where L10 forms an elongated spine to which 2 to 4 L12 dimers bind in a sequential fashion. Binds GTP-bound translation factors.

Forms part of the ribosomal stalk which helps the ribosome interact with GTP-bound translation factors. Is thus essential for accurate translation. The chain is Large ribosomal subunit protein bL12 from Burkholderia ambifaria (strain MC40-6).